Reading from the N-terminus, the 170-residue chain is Ribosome-binding factor A (170 aa).

Positions 123–170 (AKAGVYAGDEDPYVKPRVIGEDEDDDDEEGDEDGDDVDRSAPGYEPAH) are disordered. A compositionally biased stretch (acidic residues) spans 143 to 158 (EDEDDDDEEGDEDGDD).

This sequence belongs to the RbfA family. In terms of assembly, monomer. Binds 30S ribosomal subunits, but not 50S ribosomal subunits or 70S ribosomes.

The protein localises to the cytoplasm. Its function is as follows. One of several proteins that assist in the late maturation steps of the functional core of the 30S ribosomal subunit. Associates with free 30S ribosomal subunits (but not with 30S subunits that are part of 70S ribosomes or polysomes). Required for efficient processing of 16S rRNA. May interact with the 5'-terminal helix region of 16S rRNA. The sequence is that of Ribosome-binding factor A from Clavibacter sepedonicus (Clavibacter michiganensis subsp. sepedonicus).